The following is a 520-amino-acid chain: Sensory neuron membrane protein 2 (520 aa).

Topologically, residues Met1–Lys7 are cytoplasmic. Residues Ile8–Phe28 form a helical membrane-spanning segment. Residues Gln29–Glu468 lie on the Extracellular side of the membrane. N-linked (GlcNAc...) asparagine glycosylation is found at Asn44, Asn67, Asn104, Asn228, Asn271, Asn313, and Asn342. 3 cysteine pairs are disulfide-bonded: Cys267-Cys337, Cys298-Cys361, and Cys339-Cys350. A helical transmembrane segment spans residues Val469–Val489. The Cytoplasmic segment spans residues Ala490–Asn520.

Belongs to the CD36 family. As to expression, localizes to cells surrounding the sensory neurons in the antenna. Associate in a ratio of 2:1 with the neurons expressing the other subtype SNMP1.

It localises to the cell membrane. In terms of biological role, plays an olfactory role that is not restricted to pheromone sensitivity. May play a role in the elimination of lipophilic components from the sensillum lymph. The chain is Sensory neuron membrane protein 2 from Heliothis virescens (Tobacco budworm moth).